Consider the following 498-residue polypeptide: MSNENHEELNDQLIVRREKVDTLREEGIDPFGEKFIRSISPEEIETKFADKSKEELEEAAIEVSVAGRIMTKRVKGKVGFTHIQDRFHQLQIYIRKDAIGEDAYAVFKLADLGDIIGIKGTIFRTNTGELSVKATEFTLLSKSLRPLPDKYHGLKDVEQRYRQRYLDLITNEESQNRFVMRSKILKYTRDYMDNQGFLEVETPVLHTIAGGAAAKPFITHHNALDMELYLRIALELHLKRLIVGGMDKVYEIGRVFRNEGTSTRHNPEFTMLESYAAYEDYEDVMDLVEGLVSTVCKQVNGTTEITYGEYKVDLTPNWRRIHMADAVKEYVGVDFWNVTSDEEARELAKKHDVPVTEHMTYGHILNEFFETYVEEKLIQPTFVYGHPVEISPLAKKNKEDERFTDRFELFIVGREHANAFSELNDPIDQRERFEAQMKEREQGNDEAHGMDADFLEALEYGLPPTGGLGIGIDRLVMLLTDAPSIRDILLFPTMKHRD.

Positions 408 and 415 each coordinate Mg(2+).

The protein belongs to the class-II aminoacyl-tRNA synthetase family. In terms of assembly, homodimer. Requires Mg(2+) as cofactor.

It localises to the cytoplasm. The enzyme catalyses tRNA(Lys) + L-lysine + ATP = L-lysyl-tRNA(Lys) + AMP + diphosphate. The chain is Lysine--tRNA ligase from Listeria monocytogenes serovar 1/2a (strain ATCC BAA-679 / EGD-e).